We begin with the raw amino-acid sequence, 501 residues long: Inactive cytidine monophosphate-N-acetylneuraminic acid hydroxylase (501 aa).

The protein belongs to the CMP-Neu5Ac hydroxylase family. In terms of tissue distribution, widely expressed. Highly expressed in thymus. Not expressed in brain. May be expressed in adult stem cells (at protein level).

Its subcellular location is the cytoplasm. Sialic acids are components of carbohydrate chains of glycoconjugates and are involved in cell-cell recognition and cell-pathogen interactions. That protein has no CMP-N-acetylneuraminate monooxygenase activity and is not able to convert CMP-N-acetylneuraminic acid (CMP-Neu5Ac) into its hydroxylated derivative CMP-N-glycolylneuraminic acid (CMP-Neu5Gc), a sialic acid abundantly expressed at the surface of many cells in vertebrates. However, it may play a role in Wnt signaling. This chain is Inactive cytidine monophosphate-N-acetylneuraminic acid hydroxylase (CMAHP), found in Homo sapiens (Human).